A 391-amino-acid chain; its full sequence is Casein kinase II subunit alpha (391 aa).

Residues 36–41 are interaction with beta subunit; that stretch reads QDDYQL. The Protein kinase domain occupies 39–324; sequence YQLVRKLGRG…AREAMEHPYF (286 aa). ATP-binding positions include 45–53 and K68; that span reads LGRGKYSEV. D156 serves as the catalytic Proton acceptor. 2 positions are modified to phosphothreonine; by CDK1: T344 and T360. Phosphoserine; by CDK1 occurs at positions 362 and 370.

The protein belongs to the protein kinase superfamily. Ser/Thr protein kinase family. CK2 subfamily. Heterotetramer composed of two catalytic subunits (alpha chain and/or alpha' chain) and two regulatory subunits (beta chains). The tetramer can exist as a combination of 2 alpha/2 beta, 2 alpha'/2 beta or 1 alpha/1 alpha'/2 beta subunits. Also part of a CK2-SPT16-SSRP1 complex composed of SSRP1, SUPT16H, CSNK2A1, CSNK2A2 and CSNK2B, which forms following UV irradiation. Interacts with RNPS1. Interacts with SNAI1. Interacts with PML. Interacts with CCAR2. Interacts with HIRIP3. In terms of processing, phosphorylated at Thr-344, Thr-360, Ser-362 and Ser-370 by CDK1 in prophase and metaphase and dephosphorylated during anaphase. Phosphorylation does not directly affect casein kinase 2 activity, but may contribute to its regulation by forming binding sites for interacting proteins and/or targeting it to different compartments.

The protein resides in the nucleus. The catalysed reaction is L-seryl-[protein] + ATP = O-phospho-L-seryl-[protein] + ADP + H(+). It catalyses the reaction L-threonyl-[protein] + ATP = O-phospho-L-threonyl-[protein] + ADP + H(+). With respect to regulation, constitutively active protein kinase whose activity is not directly affected by phosphorylation. Seems to be regulated by level of expression and localization. Functionally, catalytic subunit of a constitutively active serine/threonine-protein kinase complex that phosphorylates a large number of substrates containing acidic residues C-terminal to the phosphorylated serine or threonine. Regulates numerous cellular processes, such as cell cycle progression, apoptosis and transcription, as well as viral infection. May act as a regulatory node which integrates and coordinates numerous signals leading to an appropriate cellular response. During mitosis, functions as a component of the p53/TP53-dependent spindle assembly checkpoint (SAC) that maintains cyclin-B-CDK1 activity and G2 arrest in response to spindle damage. Also required for p53/TP53-mediated apoptosis, phosphorylating 'Ser-392' of p53/TP53 following UV irradiation. Phosphorylates a number of DNA repair proteins in response to DNA damage, such as MDC1, MRE11, RAD9A, RAD51 and HTATSF1, promoting their recruitment to DNA damage sites. Can also negatively regulate apoptosis. Phosphorylates the caspases CASP9 and CASP2 and the apoptotic regulator NOL3. Phosphorylation protects CASP9 from cleavage and activation by CASP8, and inhibits the dimerization of CASP2 and activation of CASP8. Phosphorylates YY1, protecting YY1 from cleavage by CASP7 during apoptosis. Regulates transcription by direct phosphorylation of RNA polymerases I, II, III and IV. Also phosphorylates and regulates numerous transcription factors including NF-kappa-B, STAT1, CREB1, IRF1, IRF2, ATF1, ATF4, SRF, MAX, JUN, FOS, MYC and MYB. Phosphorylates Hsp90 and its co-chaperones FKBP4 and CDC37, which is essential for chaperone function. Mediates sequential phosphorylation of FNIP1, promoting its gradual interaction with Hsp90, leading to activate both kinase and non-kinase client proteins of Hsp90. Regulates Wnt signaling by phosphorylating CTNNB1 and the transcription factor LEF1. Acts as an ectokinase that phosphorylates several extracellular proteins. Plays an important role in the circadian clock function by phosphorylating BMAL1 at 'Ser-90' which is pivotal for its interaction with CLOCK and which controls CLOCK nuclear entry. Phosphorylates FMR1, promoting FMR1-dependent formation of a membraneless compartment. May phosphorylate histone H2A on 'Ser-1'. This chain is Casein kinase II subunit alpha (CSNK2A1), found in Bos taurus (Bovine).